Consider the following 74-residue polypeptide: Putative Fe(2+) transport protein A (74 aa).

This sequence belongs to the FeoA family.

Its function is as follows. Might be involved in Fe(2+) ion uptake. This Campylobacter jejuni subsp. jejuni serotype O:2 (strain ATCC 700819 / NCTC 11168) protein is Putative Fe(2+) transport protein A.